The following is a 242-amino-acid chain: ATP synthase subunit a (242 aa).

The next 6 membrane-spanning stretches (helical) occupy residues 29-49 (SSIY…LAFY), 84-104 (FIPL…LGMT), 114-134 (IIVT…VGFV), 140-160 (FLTL…MIVI), 181-201 (MAGH…MIYL), and 203-223 (FLPI…AILQ).

It belongs to the ATPase A chain family. F-type ATPases have 2 components, CF(1) - the catalytic core - and CF(0) - the membrane proton channel. CF(1) has five subunits: alpha(3), beta(3), gamma(1), delta(1), epsilon(1). CF(0) has three main subunits: a(1), b(2) and c(9-12). The alpha and beta chains form an alternating ring which encloses part of the gamma chain. CF(1) is attached to CF(0) by a central stalk formed by the gamma and epsilon chains, while a peripheral stalk is formed by the delta and b chains.

It localises to the cell inner membrane. Functionally, key component of the proton channel; it plays a direct role in the translocation of protons across the membrane. This is ATP synthase subunit a from Rickettsia akari (strain Hartford).